Consider the following 288-residue polypeptide: uncharacterized protein (288 aa).

The chain crosses the membrane as a helical span at residues 92 to 112 (LPTILVILGVIVVIAIVYAII). The tract at residues 121-183 (DDHNAASEKA…NDSEKLEIKA (63 aa)) is disordered. Composition is skewed to basic and acidic residues over residues 136–146 (SKYEIPKDSTL) and 154–181 (SEKETDTKKETKENEDKKKENDSEKLEI). A coiled-coil region spans residues 147 to 185 (KENQNNSSEKETDTKKETKENEDKKKENDSEKLEIKAAG).

The protein resides in the cell membrane. This is an uncharacterized protein from Bacillus subtilis (strain 168).